Here is a 133-residue protein sequence, read N- to C-terminus: Large ribosomal subunit protein eL14 (133 aa).

It belongs to the eukaryotic ribosomal protein eL14 family.

In Griffithsia japonica (Red alga), this protein is Large ribosomal subunit protein eL14 (RPL14).